A 351-amino-acid polypeptide reads, in one-letter code: Protein RecA (351 aa).

ATP is bound at residue 68–75 (GPESSGKT).

This sequence belongs to the RecA family.

It localises to the cytoplasm. In terms of biological role, can catalyze the hydrolysis of ATP in the presence of single-stranded DNA, the ATP-dependent uptake of single-stranded DNA by duplex DNA, and the ATP-dependent hybridization of homologous single-stranded DNAs. It interacts with LexA causing its activation and leading to its autocatalytic cleavage. The sequence is that of Protein RecA from Chloroflexus aggregans (strain MD-66 / DSM 9485).